The primary structure comprises 512 residues: Putative ribose/galactose/methyl galactoside import ATP-binding protein 2 (512 aa).

2 ABC transporter domains span residues 14-251 (IALT…VGRQ) and 262-507 (TSGN…TQRE). 46–53 (GENGAGKS) is a binding site for ATP.

It belongs to the ABC transporter superfamily. Carbohydrate importer 2 (CUT2) (TC 3.A.1.2) family.

It localises to the cell inner membrane. The catalysed reaction is D-ribose(out) + ATP + H2O = D-ribose(in) + ADP + phosphate + H(+). It catalyses the reaction D-galactose(out) + ATP + H2O = D-galactose(in) + ADP + phosphate + H(+). In terms of biological role, part of an ABC transporter complex involved in carbohydrate import. Could be involved in ribose, galactose and/or methyl galactoside import. Responsible for energy coupling to the transport system. This is Putative ribose/galactose/methyl galactoside import ATP-binding protein 2 from Burkholderia cenocepacia (strain HI2424).